The following is a 531-amino-acid chain: Histone-arginine methyltransferase CARMER (531 aa).

Residues 141–450 enclose the SAM-dependent MTase PRMT-type domain; it reads ASQYFQFYGY…QSYDVTIDLH (310 aa). S-adenosyl-L-methionine contacts are provided by Q154, R163, G187, E209, E238, and T266. An Asymmetric dimethylarginine; by autocatalysis modification is found at R501.

Belongs to the class I-like SAM-binding methyltransferase superfamily. Protein arginine N-methyltransferase family. In terms of assembly, homodimer. In terms of processing, the dimethylated protein is the major form.

It localises to the cytoplasm. The protein localises to the nucleus. It catalyses the reaction L-arginyl-[protein] + 2 S-adenosyl-L-methionine = N(omega),N(omega)-dimethyl-L-arginyl-[protein] + 2 S-adenosyl-L-homocysteine + 2 H(+). Functionally, methylates (mono- and asymmetric dimethylation) the guanidino nitrogens of arginyl residues in proteins. May methylate histone H3 at 'Arg-17' and activate transcription via chromatin remodeling. The protein is Histone-arginine methyltransferase CARMER (Art4) of Drosophila persimilis (Fruit fly).